The chain runs to 126 residues: Chemocyanin (126 aa).

Residues 1-30 (MAQGSGSAERALVLGVVLVFLVFNCEVAES) form the signal peptide. The 96-residue stretch at 31-126 (VVYTVGDGGG…GGLKIAVTAA (96 aa)) folds into the Phytocyanin domain. The Cu cation site is built by histidine 69, cysteine 109, and histidine 114. A disulfide bridge connects residues cysteine 82 and cysteine 115.

In terms of tissue distribution, strongly expressed in stigma and style and to a lesser extent in leaves, ovary and petals. Not detected in pollen tubes, mature anthers or roots.

Its function is as follows. Diffusible chemotropic factor that induces pollen tube chemotropism. The polypeptide is Chemocyanin (Lilium longiflorum (Trumpet lily)).